Here is a 403-residue protein sequence, read N- to C-terminus: Dihydroorotase (403 aa).

Residues H48 and H50 each coordinate Zn(2+). Substrate contacts are provided by residues 50-52 (HLR) and N82. E140, H172, H211, and D277 together coordinate Zn(2+). Residue D277 is part of the active site. H281 lines the substrate pocket.

It belongs to the metallo-dependent hydrolases superfamily. DHOase family. Class I DHOase subfamily. The cofactor is Zn(2+).

It catalyses the reaction (S)-dihydroorotate + H2O = N-carbamoyl-L-aspartate + H(+). It functions in the pathway pyrimidine metabolism; UMP biosynthesis via de novo pathway; (S)-dihydroorotate from bicarbonate: step 3/3. Functionally, catalyzes the reversible cyclization of carbamoyl aspartate to dihydroorotate. This Archaeoglobus fulgidus (strain ATCC 49558 / DSM 4304 / JCM 9628 / NBRC 100126 / VC-16) protein is Dihydroorotase.